Consider the following 889-residue polypeptide: Translation initiation factor IF-2 (889 aa).

A disordered region spans residues 1 to 299; it reads MTDNKDDKTL…EKFKRSQMQE (299 aa). The segment covering 61–76 has biased composition (low complexity); it reads ITPVAATPAARPAEQR. Residues 77 to 93 are compositionally biased toward pro residues; the sequence is PMPPQPSGRPAPQPQPH. A compositionally biased stretch (basic and acidic residues) spans 116–182; the sequence is MEARRRALAE…EAEKTEEKVE (67 aa). Over residues 196-215 the composition is skewed to low complexity; the sequence is RPQPGRAAPAATPAAPDGAA. The segment covering 220–231 has biased composition (basic and acidic residues); sequence RGTESEEDERRR. Residues 387–554 form the tr-type G domain; the sequence is SRPPIVTIMG…AILLQSEILD (168 aa). Residues 396–403 are G1; that stretch reads GHVDHGKT. 396 to 403 is a GTP binding site; sequence GHVDHGKT. The tract at residues 421-425 is G2; it reads GITQH. The interval 442 to 445 is G3; that stretch reads DTPG. Residues 442 to 446 and 496 to 499 each bind GTP; these read DTPGH and NKID. The tract at residues 496-499 is G4; that stretch reads NKID. Residues 532–534 form a G5 region; that stretch reads SAK.

This sequence belongs to the TRAFAC class translation factor GTPase superfamily. Classic translation factor GTPase family. IF-2 subfamily.

The protein localises to the cytoplasm. Its function is as follows. One of the essential components for the initiation of protein synthesis. Protects formylmethionyl-tRNA from spontaneous hydrolysis and promotes its binding to the 30S ribosomal subunits. Also involved in the hydrolysis of GTP during the formation of the 70S ribosomal complex. This Rhizobium meliloti (strain 1021) (Ensifer meliloti) protein is Translation initiation factor IF-2.